The chain runs to 1537 residues: Dicer-like protein 1 (1537 aa).

The segment at 38–68 is disordered; it reads SDPAESSVDVQDEHSSDDSDNENEVFPKQND. A Helicase ATP-binding domain is found at 133–314; it reads LFERAKTQNT…EAATRLETFL (182 aa). 146–153 provides a ligand contact to ATP; it reads LDTGSGKT. Positions 259-262 match the DEAH box motif; the sequence is DEAH. In terms of domain architecture, Helicase C-terminal spans 459-618; the sequence is ELSKHFNDTT…EILPEDRILH (160 aa). A Dicer dsRNA-binding fold domain is found at 651–741; sequence AIAILARYAS…NSIYHRRLPA (91 aa). Positions 891-1019 constitute a PAZ domain; sequence DTVSFVHNND…ICAEPLRISA (129 aa). RNase III domains lie at 1043 to 1202 and 1253 to 1405; these read IALE…LSGG and ARHV…VDSK. Residues E1294, D1391, and E1394 each contribute to the Mg(2+) site. Residues 1439-1507 enclose the DRBM domain; that stretch reads TFLHNKLTNE…SEKALAVLDG (69 aa). C1451, H1478, C1519, and C1521 together coordinate Zn(2+).

It belongs to the helicase family. Dicer subfamily. It depends on Mg(2+) as a cofactor. Mn(2+) is required as a cofactor.

Functionally, dicer-like endonuclease involved in cleaving double-stranded RNA in the RNA interference (RNAi) pathway. Produces 21 to 25 bp dsRNAs (siRNAs) which target the selective destruction of homologous RNAs leading to sequence-specific suppression of gene expression, called post-transcriptional gene silencing (PTGS). Part of a broad host defense response against viral infection and transposons. This Aspergillus fumigatus (strain ATCC MYA-4609 / CBS 101355 / FGSC A1100 / Af293) (Neosartorya fumigata) protein is Dicer-like protein 1 (dcl1).